We begin with the raw amino-acid sequence, 83 residues long: Large ribosomal subunit protein bL27 (83 aa).

The protein belongs to the bacterial ribosomal protein bL27 family.

This is Large ribosomal subunit protein bL27 from Treponema denticola (strain ATCC 35405 / DSM 14222 / CIP 103919 / JCM 8153 / KCTC 15104).